Consider the following 274-residue polypeptide: NH(3)-dependent NAD(+) synthetase (274 aa).

An ATP-binding site is contributed by 46-53 (GISGGQDS). Residue Asp-52 participates in Mg(2+) binding. Position 140 (Arg-140) interacts with deamido-NAD(+). Residue Thr-160 participates in ATP binding. Mg(2+) is bound at residue Glu-165. 2 residues coordinate deamido-NAD(+): Lys-173 and Asp-180. Residues Lys-189 and Thr-211 each coordinate ATP. Position 260 to 261 (260 to 261 (HK)) interacts with deamido-NAD(+).

It belongs to the NAD synthetase family. In terms of assembly, homodimer.

The enzyme catalyses deamido-NAD(+) + NH4(+) + ATP = AMP + diphosphate + NAD(+) + H(+). Its pathway is cofactor biosynthesis; NAD(+) biosynthesis; NAD(+) from deamido-NAD(+) (ammonia route): step 1/1. Functionally, catalyzes the ATP-dependent amidation of deamido-NAD to form NAD. Uses ammonia as a nitrogen source. In Pectobacterium atrosepticum (strain SCRI 1043 / ATCC BAA-672) (Erwinia carotovora subsp. atroseptica), this protein is NH(3)-dependent NAD(+) synthetase.